The following is a 95-amino-acid chain: Opiscorpine-3 (95 aa).

Positions 1–19 (MNNKLTALIFLGLLAIASC) are cleaved as a signal peptide. The BetaSPN-type CS-alpha/beta domain maps to 55 to 95 (EFMCVANVDMTKSCDTHCQKASGEKGYCHGTKCKCGVPLSY). 3 disulfides stabilise this stretch: Cys58–Cys82, Cys68–Cys87, and Cys72–Cys89.

Belongs to the long chain scorpion toxin family. Class 3 subfamily. As to expression, expressed by the venom gland.

The protein resides in the secreted. Its function is as follows. Has antimicrobial activity against yeasts and bacteria. This is Opiscorpine-3 from Opistophthalmus carinatus (African yellow leg scorpion).